A 68-amino-acid chain; its full sequence is Neuronal regeneration-related protein (68 aa).

The segment at 21-54 (MEGRLPKGRLPVPKEVNRKKNDETNAASLTPLGS) is disordered. Residues 44–54 (TNAASLTPLGS) show a composition bias toward polar residues.

As to quaternary structure, interacts with the latency-associated peptides (LAP) of TGFB1 and TGFB2; the interaction results in a decrease in TGFB autoinduction. Interacts with FLNA. In terms of processing, phosphorylated on Ser-59. Phosphorylation decreases stability and activity.

It localises to the cytoplasm. Functionally, may have roles in neural function and cellular differentiation. Ectopic expression promotes axonal regeneration, induces differentiation of fibroblast into myofibroblast, induces myofibroblast ameboid migration, augments motility of gliomas, and increases retinoic-acid regulation of lipid-droplet biogenesis. Down-regulates the expression of TGFB1 and TGFB2 but not of TGFB3. May play a role in the regulation of alveolar generation. The chain is Neuronal regeneration-related protein (NREP) from Macaca fascicularis (Crab-eating macaque).